Consider the following 118-residue polypeptide: Large ribosomal subunit protein uL18 (118 aa).

The protein belongs to the universal ribosomal protein uL18 family. As to quaternary structure, part of the 50S ribosomal subunit; part of the 5S rRNA/L5/L18/L25 subcomplex. Contacts the 5S and 23S rRNAs.

This is one of the proteins that bind and probably mediate the attachment of the 5S RNA into the large ribosomal subunit, where it forms part of the central protuberance. This Rickettsia prowazekii (strain Madrid E) protein is Large ribosomal subunit protein uL18.